Reading from the N-terminus, the 414-residue chain is TBC domain-containing protein C1778.09 (414 aa).

The region spanning 158–343 (GIPDCWRSIA…RIWDLLFLLG (186 aa)) is the Rab-GAP TBC domain.

It localises to the cytoplasm. Its subcellular location is the nucleus. The chain is TBC domain-containing protein C1778.09 from Schizosaccharomyces pombe (strain 972 / ATCC 24843) (Fission yeast).